A 252-amino-acid polypeptide reads, in one-letter code: Octanoyltransferase (252 aa).

Low complexity predominate over residues 1 to 21 (MPSAPAAPAAPAAPDAAASVA). The interval 1 to 22 (MPSAPAAPAAPAAPDAAASVAP) is disordered. The 182-residue stretch at 56–237 (PDTDDEIWVV…RLIAHLDGAT (182 aa)) folds into the BPL/LPL catalytic domain. Substrate contacts are provided by residues 96 to 103 (RGGQITYH), 168 to 170 (ALG), and 181 to 183 (GLS). Residue Cys-199 is the Acyl-thioester intermediate of the active site.

The protein belongs to the LipB family.

It localises to the cytoplasm. It carries out the reaction octanoyl-[ACP] + L-lysyl-[protein] = N(6)-octanoyl-L-lysyl-[protein] + holo-[ACP] + H(+). It participates in protein modification; protein lipoylation via endogenous pathway; protein N(6)-(lipoyl)lysine from octanoyl-[acyl-carrier-protein]: step 1/2. In terms of biological role, catalyzes the transfer of endogenously produced octanoic acid from octanoyl-acyl-carrier-protein onto the lipoyl domains of lipoate-dependent enzymes. Lipoyl-ACP can also act as a substrate although octanoyl-ACP is likely to be the physiological substrate. The polypeptide is Octanoyltransferase (Burkholderia pseudomallei (strain 668)).